A 291-amino-acid chain; its full sequence is 3-hydroxy-5-phosphonooxypentane-2,4-dione thiolase (291 aa).

Lys203 acts as the Schiff-base intermediate with substrate in catalysis.

This sequence belongs to the DeoC/FbaB aldolase family. Homodecamer.

Its subcellular location is the cytoplasm. The catalysed reaction is dihydroxyacetone phosphate + acetyl-CoA = 3-hydroxy-2,4-dioxopentyl phosphate + CoA. In terms of biological role, involved in the degradation of phospho-AI-2, thereby terminating induction of the lsr operon and closing the AI-2 signaling cycle. Catalyzes the transfer of an acetyl moiety from 3-hydroxy-5-phosphonooxypentane-2,4-dione to CoA to form glycerone phosphate and acetyl-CoA. This chain is 3-hydroxy-5-phosphonooxypentane-2,4-dione thiolase, found in Yersinia enterocolitica serotype O:8 / biotype 1B (strain NCTC 13174 / 8081).